We begin with the raw amino-acid sequence, 295 residues long: Ribosomal protein L11 methyltransferase (295 aa).

S-adenosyl-L-methionine contacts are provided by T138, G161, D183, and N230.

Belongs to the methyltransferase superfamily. PrmA family.

The protein localises to the cytoplasm. The enzyme catalyses L-lysyl-[protein] + 3 S-adenosyl-L-methionine = N(6),N(6),N(6)-trimethyl-L-lysyl-[protein] + 3 S-adenosyl-L-homocysteine + 3 H(+). In terms of biological role, methylates ribosomal protein L11. This is Ribosomal protein L11 methyltransferase from Rhodopseudomonas palustris (strain BisB5).